Consider the following 62-residue polypeptide: MAVTIDYSLCKGAECAECVNNCPMEVFEIEGDKVVVARPDDCTYCGVCEDVCPTGAVKVEPE.

2 consecutive 4Fe-4S ferredoxin-type domains span residues 2–31 and 32–62; these read AVTI…EIEG and DKVV…VEPE. Cys10, Cys15, Cys18, Cys22, Cys42, Cys45, Cys48, and Cys52 together coordinate [4Fe-4S] cluster.

It depends on [4Fe-4S] cluster as a cofactor.

This is an uncharacterized protein from Methanocaldococcus jannaschii (strain ATCC 43067 / DSM 2661 / JAL-1 / JCM 10045 / NBRC 100440) (Methanococcus jannaschii).